The following is a 748-amino-acid chain: Rho GTPase-activating protein 24 (748 aa).

The PH domain occupies 18–124 (NATKCGWLRK…WVKSIRRVIW (107 aa)). The Rho-GAP domain maps to 134 to 328 (QKLEDTVRYE…VMISKHDRLF (195 aa)). Positions 328–476 (FPKDTEPQSK…SSGTKMGTHS (149 aa)) are disordered. 2 stretches are compositionally biased toward polar residues: residues 335–347 (QSKPQEGPNSNNN) and 356–368 (GQLQNKENNNTKE). 8 positions are modified to phosphoserine: serine 369, serine 391, serine 396, serine 398, serine 402, serine 413, serine 415, and serine 437. A compositionally biased stretch (basic and acidic residues) spans 369–381 (SPVRRCSWDKPES). The span at 382–405 (PQRSSMDNGSPTALSGSKTNSPRN) shows a compositional bias: polar residues. Polar residues predominate over residues 432–476 (IVTNGSFSSSNAEGVEKTQTTPNGSLQARRTSSLKSSGTKMGTHS). Residue threonine 452 is modified to Phosphothreonine. Position 495 is a phosphoserine (serine 495). Positions 582–640 (DFYGGNFEDPVLDGPPQDDLSHPGDYENKSDRRSVGGRSSRATSSSDNSETFVGNTSSN) are disordered. Basic and acidic residues predominate over residues 600 to 615 (DLSHPGDYENKSDRRS). Over residues 617-630 (GGRSSRATSSSDNS) the composition is skewed to low complexity. Positions 631 to 640 (ETFVGNTSSN) are enriched in polar residues. Residues 649 to 729 (SSLKQEMTKQ…KEMEQFFSTF (81 aa)) are a coiled coil.

Interacts with FLNA. Post-translationally, phosphorylated by ROCK, leading to activate the RacGAP activity.

It is found in the cytoplasm. The protein localises to the cytoskeleton. Its subcellular location is the cell junction. The protein resides in the adherens junction. It localises to the focal adhesion. It is found in the cell projection. Its function is as follows. Rho GTPase-activating protein involved in cell polarity, cell morphology and cytoskeletal organization. Acts as a GTPase activator for the Rac-type GTPase by converting it to an inactive GDP-bound state. Controls actin remodeling by inactivating Rac downstream of Rho leading to suppress leading edge protrusion and promotes cell retraction to achieve cellular polarity. Able to suppress RAC1 and CDC42 activity in vitro. Overexpression induces cell rounding with partial or complete disruption of actin stress fibers and formation of membrane ruffles, lamellipodia, and filopodia. Isoform 2 is a vascular cell-specific GAP involved in modulation of angiogenesis. The sequence is that of Rho GTPase-activating protein 24 (Arhgap24) from Rattus norvegicus (Rat).